The following is a 1129-amino-acid chain: Regulator of nonsense transcripts 1 (1129 aa).

The sufficient for interaction with RENT2 stretch occupies residues M1 to E415. A phosphoserine mark is found at S10 and S31. The disordered stretch occupies residues T39–A70. The segment covering G52–A69 has biased composition (gly residues). In terms of domain architecture, Upf1 CH-rich spans T115–N272. The Zn(2+) site is built by C123, C126, C137, S140, C145, H155, H159, C165, C183, C186, C209, and C213. A C3H region spans residues C123–H155. Positions C137 to C165 are CC/SHH/C. Positions C183 to C213 are C4. Residues Q486 and G506–T510 contribute to the ATP site. At S565 the chain carries Phosphoserine. ATP-binding residues include Q676, Y713, and E844. Position 956 is a phosphoserine (S956). Disordered stretches follow at residues F1009–Q1058 and S1073–D1096. Residue R1019 is modified to Omega-N-methylarginine. Residues K1025–N1034 show a composition bias toward basic residues. A compositionally biased stretch (polar residues) spans P1041 to Q1058. The span at S1073–P1086 shows a compositional bias: low complexity. A phosphoserine mark is found at S1089, S1107, S1110, and S1127. Short sequence motifs ([ST]-Q motif) lie at residues S1089–Q1090 and S1107–Q1108. The interval S1110–Y1129 is disordered.

It belongs to the DNA2/NAM7 helicase family. As to quaternary structure, found in a post-splicing messenger ribonucleoprotein (mRNP) complex. Associates with the exon junction complex (EJC). Associates with the SGM1C complex; is phosphorylated by the complex kinase component SGM1. Part of a complex composed of SMG1, DHX34 and UPF1; within the complex DHX34 acts as a scaffolding protein to facilitate SMG1 phosphorylation of UPF1. Interacts with UPF2. Interacts with UPF3A and UPF3B. Interacts with EST1A. Interacts with SLBP. Interacts (when hyperphosphorylated) with PNRC2. Interacts with AGO1 and AGO2. Interacts with GSPT2. Interacts with isoform 1 and isoform 5 of ADAR/ADAR1. Interacts with SMG7. Interacts with ZC3H12A; this interaction occurs in a mRNA translationally active- and termination-dependent manner and is essential for ZC3H12A-mediated degradation of target mRNAs. Interacts with CPSF6. Interacts with MOV10; the interaction is direct and RNA-dependent. Interacts with SHFL; the interaction increases in the presence of RNA. Interacts with UPF2 and DDX4; interactions are mediated by TDRD6. Interacts with DHX34 and PABPC1/PABP1; the interactions are RNA-independent. Interacts with RBM46. (Microbial infection) Interacts with human T-cell leukemia virus 1/HTLV-1 protein Tax; this interaction inhibits the host nonsense-mediated mRNA decay (NMD). Phosphorylated by SMG1; required for formation of mRNA surveillance complexes. As to expression, ubiquitous.

It localises to the cytoplasm. The protein resides in the P-body. It is found in the nucleus. The protein localises to the perinuclear region. It carries out the reaction ATP + H2O = ADP + phosphate + H(+). In terms of biological role, RNA-dependent helicase required for nonsense-mediated decay (NMD) of aberrant mRNAs containing premature stop codons and modulates the expression level of normal mRNAs. Is recruited to mRNAs upon translation termination and undergoes a cycle of phosphorylation and dephosphorylation; its phosphorylation appears to be a key step in NMD. Recruited by release factors to stalled ribosomes together with the SMG1C protein kinase complex to form the transient SURF (SMG1-UPF1-eRF1-eRF3) complex. In EJC-dependent NMD, the SURF complex associates with the exon junction complex (EJC) (located 50-55 or more nucleotides downstream from the termination codon) through UPF2 and allows the formation of an UPF1-UPF2-UPF3 surveillance complex which is believed to activate NMD. Phosphorylated UPF1 is recognized by EST1B/SMG5, SMG6 and SMG7 which are thought to provide a link to the mRNA degradation machinery involving exonucleolytic and endonucleolytic pathways, and to serve as adapters to protein phosphatase 2A (PP2A), thereby triggering UPF1 dephosphorylation and allowing the recycling of NMD factors. UPF1 can also activate NMD without UPF2 or UPF3, and in the absence of the NMD-enhancing downstream EJC indicative for alternative NMD pathways. Plays a role in replication-dependent histone mRNA degradation at the end of phase S; the function is independent of UPF2. For the recognition of premature termination codons (PTC) and initiation of NMD a competitive interaction between UPF1 and PABPC1 with the ribosome-bound release factors is proposed. The ATPase activity of UPF1 is required for disassembly of mRNPs undergoing NMD. Together with UPF2 and dependent on TDRD6, mediates the degradation of mRNA harboring long 3'UTR by inducing the NMD machinery. Also capable of unwinding double-stranded DNA and translocating on single-stranded DNA. This Homo sapiens (Human) protein is Regulator of nonsense transcripts 1.